Here is a 356-residue protein sequence, read N- to C-terminus: tRNA N6-adenosine threonylcarbamoyltransferase (356 aa).

Residues His115 and His119 each coordinate Fe cation. Substrate is bound by residues 138-142 (LVSGG), Asp171, Gly184, and Asn283. A Fe cation-binding site is contributed by Asp311.

It belongs to the KAE1 / TsaD family. Fe(2+) is required as a cofactor.

Its subcellular location is the cytoplasm. The catalysed reaction is L-threonylcarbamoyladenylate + adenosine(37) in tRNA = N(6)-L-threonylcarbamoyladenosine(37) in tRNA + AMP + H(+). Functionally, required for the formation of a threonylcarbamoyl group on adenosine at position 37 (t(6)A37) in tRNAs that read codons beginning with adenine. Is involved in the transfer of the threonylcarbamoyl moiety of threonylcarbamoyl-AMP (TC-AMP) to the N6 group of A37, together with TsaE and TsaB. TsaD likely plays a direct catalytic role in this reaction. In Prochlorococcus marinus (strain MIT 9215), this protein is tRNA N6-adenosine threonylcarbamoyltransferase.